A 415-amino-acid polypeptide reads, in one-letter code: Serine--tRNA ligase (415 aa).

231–233 provides a ligand contact to L-serine; sequence TAE. 262-264 contributes to the ATP binding site; the sequence is RSE. E285 contacts L-serine. 349–352 contributes to the ATP binding site; sequence EISS. Residue S383 participates in L-serine binding.

The protein belongs to the class-II aminoacyl-tRNA synthetase family. Type-1 seryl-tRNA synthetase subfamily. As to quaternary structure, homodimer. The tRNA molecule binds across the dimer.

It localises to the cytoplasm. The catalysed reaction is tRNA(Ser) + L-serine + ATP = L-seryl-tRNA(Ser) + AMP + diphosphate + H(+). It catalyses the reaction tRNA(Sec) + L-serine + ATP = L-seryl-tRNA(Sec) + AMP + diphosphate + H(+). It functions in the pathway aminoacyl-tRNA biosynthesis; selenocysteinyl-tRNA(Sec) biosynthesis; L-seryl-tRNA(Sec) from L-serine and tRNA(Sec): step 1/1. In terms of biological role, catalyzes the attachment of serine to tRNA(Ser). Is also able to aminoacylate tRNA(Sec) with serine, to form the misacylated tRNA L-seryl-tRNA(Sec), which will be further converted into selenocysteinyl-tRNA(Sec). In Helicobacter pylori (strain ATCC 700392 / 26695) (Campylobacter pylori), this protein is Serine--tRNA ligase.